Consider the following 70-residue polypeptide: Conotoxin TxMMSK-02 (70 aa).

Residues 1-20 (MMSKLGALLTICLLLFSLTA) form the signal peptide. A propeptide spanning residues 21 to 53 (VPLDGDQHADQPAQRLQDRIPTEDHPLFDPNKR) is cleaved from the precursor. Intrachain disulfides connect C54/C68, C55/C64, and C60/C67. P66 is subject to 4-hydroxyproline. Y69 carries the tyrosine amide modification.

This sequence belongs to the conotoxin M superfamily. In terms of tissue distribution, expressed by the venom duct.

Its subcellular location is the secreted. In Conus textile (Cloth-of-gold cone), this protein is Conotoxin TxMMSK-02.